The sequence spans 209 residues: Cytidylyl-2-hydroxypropylphosphonate hydrolase (209 aa).

A divalent metal cation contacts are provided by asparagine 111, aspartate 127, glutamate 129, and aspartate 131. Lysine 144 acts as the Proton donor in catalysis. Aspartate 145 provides a ligand contact to a divalent metal cation.

It belongs to the FomD family. In terms of assembly, monomer in solution. The cofactor is Mn(2+). Co(2+) serves as cofactor.

It catalyses the reaction cytidine 5'-({hydroxy[(S)-2-hydroxypropyl]phosphonoyl}phosphate) + H2O = (S)-2-hydroxypropylphosphonate + CMP + H(+). The protein operates within antibiotic biosynthesis; fosfomycin biosynthesis. Hydrolysis of (S)-HPP-CMP is inhibited by CDP. Involved in fosfomycin biosynthesis. Catalyzes the hydrolysis of cytidylyl (S)-2-hydroxypropylphosphonate ((S)-HPP-CMP) to give (S)-2-hydroxypropylphosphonate ((S)-HPP) and CMP. Can also hydrolyze (R)-HPP-CMP and cytidylyl 2-hydroxyethylphosphonate (HEP-CMP), which is a biosynthetic intermediate before C-methylation, but the catalytic efficiency is much higher with (S)-HPP-CMP. In Streptomyces wedmorensis, this protein is Cytidylyl-2-hydroxypropylphosphonate hydrolase.